Consider the following 349-residue polypeptide: Isopentenyl-diphosphate delta-isomerase (349 aa).

Position 6–7 (6–7) interacts with substrate; sequence RK. FMN is bound by residues 62 to 64, Ser-93, and Asn-122; that span reads AMT. Substrate is bound at residue Gln-152. Position 153 (Glu-153) interacts with Mg(2+). FMN contacts are provided by residues Lys-184, Thr-214, 258–259, and 280–281; these read GG and AG.

Belongs to the IPP isomerase type 2 family. As to quaternary structure, homooctamer. Dimer of tetramers. It depends on FMN as a cofactor. NADPH serves as cofactor. Requires Mg(2+) as cofactor.

It localises to the cytoplasm. The enzyme catalyses isopentenyl diphosphate = dimethylallyl diphosphate. In terms of biological role, involved in the biosynthesis of isoprenoids. Catalyzes the 1,3-allylic rearrangement of the homoallylic substrate isopentenyl (IPP) to its allylic isomer, dimethylallyl diphosphate (DMAPP). This is Isopentenyl-diphosphate delta-isomerase from Bacillus anthracis (strain A0248).